Here is a 360-residue protein sequence, read N- to C-terminus: Probable protein phosphatase 2C 54 (360 aa).

A disordered region spans residues 1 to 39 (MCVEESEGAERLDFGEPAAAAADAGKSKSKSPDELPSPR). A PPM-type phosphatase domain is found at 65–325 (RSGDWSDIGG…DNLTAVLVSF (261 aa)). Positions 109, 110, 273, and 316 each coordinate Mn(2+).

The protein belongs to the PP2C family. It depends on Mg(2+) as a cofactor. The cofactor is Mn(2+).

The enzyme catalyses O-phospho-L-seryl-[protein] + H2O = L-seryl-[protein] + phosphate. It catalyses the reaction O-phospho-L-threonyl-[protein] + H2O = L-threonyl-[protein] + phosphate. The chain is Probable protein phosphatase 2C 54 from Oryza sativa subsp. japonica (Rice).